Consider the following 362-residue polypeptide: 3-dehydroquinate synthase (362 aa).

Residues 70–75 (DGEKYK), 104–108 (GVIGD), 128–129 (TT), Lys141, and Lys150 contribute to the NAD(+) site. Zn(2+)-binding residues include Glu183, His246, and His263.

Belongs to the sugar phosphate cyclases superfamily. Dehydroquinate synthase family. Requires Co(2+) as cofactor. Zn(2+) serves as cofactor. The cofactor is NAD(+).

The protein resides in the cytoplasm. It carries out the reaction 7-phospho-2-dehydro-3-deoxy-D-arabino-heptonate = 3-dehydroquinate + phosphate. It functions in the pathway metabolic intermediate biosynthesis; chorismate biosynthesis; chorismate from D-erythrose 4-phosphate and phosphoenolpyruvate: step 2/7. Functionally, catalyzes the conversion of 3-deoxy-D-arabino-heptulosonate 7-phosphate (DAHP) to dehydroquinate (DHQ). The sequence is that of 3-dehydroquinate synthase from Acinetobacter baylyi (strain ATCC 33305 / BD413 / ADP1).